A 218-amino-acid polypeptide reads, in one-letter code: uncharacterized protein (218 aa).

Transmembrane regions (helical) follow at residues 14–34 and 175–195; these read CLLS…YFTS and LIIP…LALV.

To H.pylori HP0270.

The protein resides in the cell membrane. This is an uncharacterized protein from Rickettsia prowazekii (strain Madrid E).